The primary structure comprises 1486 residues: MKPLAIPANHGVMGQQEKHSLPADFTKLHLTDSLHPQVTHVSSSHSGCSITSDSGSSSLSDIYQATESEAGDMDLSGLPETAVDSEDDDDEEDIERASDPLMSRDIVRDCLEKDPIDRTDDDIEQLLEFMHQLPAFANMTMSVRRELCAVMVFAVVERAGTIVLNDGEELDSWSVILNGSVEVTYPDGKAEILCMGNSFGVSPTMDKEYMKGVMRTKVDDCQFVCIAQQDYCRILNQVEKNMQKVEEEGEIVMVKEHRELDRTGTRKGHIVIKGTSERLTMHLVEEHSVVDPTFIEDFLLTYRTFLCSPMEVGKKLLEWFNDPSLRDKVTRVVLLWVNNHFNDFEGDPAMTRFLEEFENNLEREKMGGHLRLLNIACAAKAKRRLMTLTKPAREAPLPFILLGGSEKGFGIFVDSVDSASKATEAGLKRGDQILEVNGQNFENIQLSKAMEILRNNTHLSITVKTNLFVFKELLTRLSEEKRNGAPHLPKIGDIKKASRYSIPDLAVDVEQVIGLEKVNKKSKANTVGGRNKLKKILDKTRISILPQKPYNDIGIGQSQDDSIVGLRQTKHIPTALPVSGTLSSSNPDLLQSHHRILDFSATPDLPDQVLRVFKADQQSRYIMISKDTTAKEVVVQAIREFAVTATPDQYSLCEVSVTPEGVIKQRRLPDQLSKLADRIQLSGRYYLKNNMETETLCSDEDAQELLRESQISLLQLSTVEVATQLSMRNFELFRNIEPTEYIDDLFKLKSKTSCANLKTFEEVINQETFWVASEILRETNQLKRMKIIKHFIKIALHCRECKNFNSMFAIISGLNLAPVARLRTTWEKLPNKYEKLFQDLQDLFDPSRNMAKYRNVLNSQNLQPPIIPLFPVIKKDLTFLHEGNDSKVDGLVNFEKLRMIAKEIRHVGRMASVNMDPALMFRTRKKKWRSLGSLSQGSTNATVLDVAQTGGHKKRVRRSSFLNAKKLYEDAQMARKVKQYLSNLELEMDEESLQTLSLQCEPATNTLPKNPTDKKPVKSETSPVAPRAGLQPKAQPQPQPPQPPHKLNQGLQVPAVSLYPSRKKVPVKDLPPFGINSPQALKKILSLSEEGSLERHRRPAEDTISNTSSQLSSPPTSPQSSPRKGYTLAPSGTVDNFSDSGHSEISSRSSIVSNSSFDSLPVSLPDERRQRPSVSIVETSLASGRLERRPAVEPDQYSLGSCAPLSESRGLYAAATVISSPSTEELSQDQGDRASLDAADSGRGSWTSCSSGSHDNIQTIQHQRSWETLPFGHTHFDYPGDAAGLWASSSHMDQIMFPDHSAKYSRQSQSRESLDQAQSRASWASSTGYWGEDSEGDTGTIKRRGGKDVSLDADSSSMTAVTAEEAKPAAMAAHIAVTPSAAKGLIARKEGRYREPPPTPPGYVGIPITDFPEAHPHPARKPPDYTVALQRSRMLARPAEPPAPGSARPAPRPQWHRPGDGDPRAGPCAPPGLTAEEDEDEQVSAV.

2 disordered regions span residues 40 to 59 and 68 to 101; these read HVSSSHSGCSITSDSGSSSL and SEAGDMDLSGLPETAVDSEDDDDEEDIERASDPL. The segment covering 83–94 has biased composition (acidic residues); that stretch reads VDSEDDDDEEDI. 135–252 provides a ligand contact to a nucleoside 3',5'-cyclic phosphate; it reads AFANMTMSVR…QKVEEEGEIV (118 aa). Residues 267 to 380 form the N-terminal Ras-GEF domain; sequence KGHIVIKGTS…RLLNIACAAK (114 aa). Residues 385–468 form the PDZ domain; it reads LMTLTKPARE…LSITVKTNLF (84 aa). Residue serine 501 is modified to Phosphoserine. In terms of domain architecture, Ras-associating spans 606 to 692; the sequence is PDQVLRVFKA…GRYYLKNNME (87 aa). Threonine 644 carries the phosphothreonine modification. One can recognise a Ras-GEF domain in the interval 717-944; that stretch reads STVEVATQLS…SQGSTNATVL (228 aa). 4 positions are modified to phosphoserine: serine 806, serine 930, serine 933, and serine 1022. Residues 1002–1049 are disordered; sequence PATNTLPKNPTDKKPVKSETSPVAPRAGLQPKAQPQPQPPQPPHKLNQ. Positions 1035–1044 are enriched in pro residues; it reads QPQPQPPQPP. Residues serine 1077, serine 1086, serine 1092, serine 1113, serine 1117, serine 1156, and serine 1173 each carry the phosphoserine modification. 4 disordered regions span residues 1090-1176, 1221-1254, 1303-1357, and 1391-1486; these read EGSL…SVSI, PSTEELSQDQGDRASLDAADSGRGSWTSCSSGSH, KYSR…DSSS, and GRYR…VSAV. Composition is skewed to low complexity over residues 1105 to 1122 and 1138 to 1159; these read SNTSSQLSSPPTSPQSSP and SDSGHSEISSRSSIVSNSSFDS. Polar residues-rich tracts occupy residues 1244 to 1254 and 1304 to 1328; these read GSWTSCSSGSH and YSRQSQSRESLDQAQSRASWASSTG. Residues 1475-1486 are compositionally biased toward acidic residues; it reads AEEDEDEQVSAV.

The protein belongs to the RAPGEF2 family. Found in a complex, at least composed of KIDINS220, MAGI2, NTRK1 and RAPGEF2; the complex is mainly formed at late endosomes in a neuronal growth factor (NGF)-dependent manner. Interacts (via C-terminal domain) with NEDD4 (via WW domains); this interaction leads to ubiquitination and degradation via the proteasome pathway in a cAMP-independent manner. Interacts with MAGI1 (via PDZ domain). Interacts with ADRB1 (via C-terminal PDZ motif); the interaction is direct. Interacts (via Ras-associating domain) with RAP1A (via GTP-bound active form). Interacts weakly with HRAS (via GDP- and GTP-bound forms). Interacts (via C-terminal domain) with MAGI2 (via PDZ and WW domains). Interacts with CDH1 and TJP1. Interacts with CTNNB1. Ubiquitinated by NEDD4, leading to proteasomal degradation. In terms of processing, phosphorylation by PLK2 promotes its activity.

The protein localises to the cytoplasm. It localises to the perinuclear region. The protein resides in the cell membrane. It is found in the late endosome. Its subcellular location is the cell junction. In terms of biological role, functions as a guanine nucleotide exchange factor (GEF), which activates Rap and Ras family of small GTPases by exchanging bound GDP for free GTP in a cAMP-dependent manner. Serves as a link between cell surface receptors and Rap/Ras GTPases in intracellular signaling cascades. Also acts as an effector for Rap1 by direct association with Rap1-GTP thereby leading to the amplification of Rap1-mediated signaling. Shows weak activity on HRAS. It is controversial whether RAPGEF2 binds cAMP and cGMP or not. Its binding to ligand-activated beta-1 adrenergic receptor ADRB1 leads to the Ras activation through the G(s)-alpha signaling pathway. Involved in the cAMP-induced Ras and Erk1/2 signaling pathway that leads to sustained inhibition of long term melanogenesis by reducing dendrite extension and melanin synthesis. Also provides inhibitory signals for cell proliferation of melanoma cells and promotes their apoptosis in a cAMP-independent nanner. Regulates cAMP-induced neuritogenesis by mediating the Rap1/B-Raf/ERK signaling through a pathway that is independent on both PKA and RAPGEF3/RAPGEF4. Involved in neuron migration and in the formation of the major forebrain fiber connections forming the corpus callosum, the anterior commissure and the hippocampal commissure during brain development. Involved in neuronal growth factor (NGF)-induced sustained activation of Rap1 at late endosomes and in brain-derived neurotrophic factor (BDNF)-induced axon outgrowth of hippocampal neurons. Plays a role in the regulation of embryonic blood vessel formation and in the establishment of basal junction integrity and endothelial barrier function. May be involved in the regulation of the vascular endothelial growth factor receptor KDR and cadherin CDH5 expression at allantois endothelial cell-cell junctions. Binds to cAMP. This is Rap guanine nucleotide exchange factor 2 (RAPGEF2) from Bos taurus (Bovine).